A 290-amino-acid chain; its full sequence is Probable aquaporin PIP2-7 (290 aa).

Helical transmembrane passes span Ala45–Ile65 and Gly79–Cys99. An NPA 1 motif is present at residues Asn109–Ala111. Helical transmembrane passes span Val128–Ile148, Ser168–Phe188, and Ile202–Ile222. Residues Asn230–Ala232 carry the NPA 2 motif. Residues Ile252–Leu272 traverse the membrane as a helical segment.

This sequence belongs to the MIP/aquaporin (TC 1.A.8) family. PIP (TC 1.A.8.11) subfamily. In terms of tissue distribution, expressed in roots.

It is found in the cell membrane. Its function is as follows. Aquaporins facilitate the transport of water and small neutral solutes across cell membranes. The protein is Probable aquaporin PIP2-7 (PIP2-7) of Oryza sativa subsp. japonica (Rice).